The sequence spans 338 residues: Methionine synthase (338 aa).

Zn(2+)-binding residues include H210, C212, E234, and C294.

It belongs to the archaeal MetE family. The cofactor is Zn(2+).

It functions in the pathway amino-acid biosynthesis; L-methionine biosynthesis via de novo pathway. Functionally, catalyzes the transfer of a methyl group to L-homocysteine resulting in methionine formation. The physiological methyl donor is unknown. The polypeptide is Methionine synthase (Pyrococcus furiosus (strain ATCC 43587 / DSM 3638 / JCM 8422 / Vc1)).